A 191-amino-acid chain; its full sequence is MLKVNKYVILIIAFVSQMMFSTTAQASFSATVSDAWSTLSNNVTQTWQAPEHYDLYVPVITWHARFAYDQEKIDNYNERPWGAGFGMSRWDEKGNWNGLYLMAFKDSFNKWEPIVGYGWEKTWRPLADDNFHLGLGYTLGVTARDNWNYIPLPVILPMASVGYGPATFQMTYIPGTYNNGNVYFAWLRFQF.

A signal peptide spans 1 to 26; sequence MLKVNKYVILIIAFVSQMMFSTTAQA. Residues H63, D106, and S107 contribute to the active site.

The protein belongs to the lipid A palmitoyltransferase family. Homodimer.

It is found in the cell outer membrane. It catalyses the reaction a lipid A + a 1,2-diacyl-sn-glycero-3-phosphocholine = a hepta-acyl lipid A + a 2-acyl-sn-glycero-3-phosphocholine. It carries out the reaction a lipid IVA + a 1,2-diacyl-sn-glycero-3-phosphocholine = a lipid IVB + a 2-acyl-sn-glycero-3-phosphocholine. The enzyme catalyses a lipid IIA + a 1,2-diacyl-sn-glycero-3-phosphocholine = a lipid IIB + a 2-acyl-sn-glycero-3-phosphocholine. Functionally, transfers a fatty acid residue from the sn-1 position of a phospholipid to the N-linked hydroxyfatty acid chain on the proximal unit of lipid A or its precursors. This chain is Lipid A acyltransferase PagP, found in Enterobacter lignolyticus (strain SCF1).